A 253-amino-acid polypeptide reads, in one-letter code: Adenosylcobinamide-GDP ribazoletransferase (253 aa).

A run of 4 helical transmembrane segments spans residues 33 to 53, 106 to 126, 132 to 152, and 178 to 198; these read ISPL…YVLL, IGSG…VALL, FYTI…GLYI, and VLLL…FLVF.

The protein belongs to the CobS family. The cofactor is Mg(2+).

The protein localises to the cell membrane. It catalyses the reaction alpha-ribazole + adenosylcob(III)inamide-GDP = adenosylcob(III)alamin + GMP + H(+). The catalysed reaction is alpha-ribazole 5'-phosphate + adenosylcob(III)inamide-GDP = adenosylcob(III)alamin 5'-phosphate + GMP + H(+). It functions in the pathway cofactor biosynthesis; adenosylcobalamin biosynthesis; adenosylcobalamin from cob(II)yrinate a,c-diamide: step 7/7. Functionally, joins adenosylcobinamide-GDP and alpha-ribazole to generate adenosylcobalamin (Ado-cobalamin). Also synthesizes adenosylcobalamin 5'-phosphate from adenosylcobinamide-GDP and alpha-ribazole 5'-phosphate. The sequence is that of Adenosylcobinamide-GDP ribazoletransferase from Saccharolobus islandicus (strain Y.G.57.14 / Yellowstone #1) (Sulfolobus islandicus).